Reading from the N-terminus, the 178-residue chain is Cytochrome b6-f complex iron-sulfur subunit 2 (178 aa).

Residues 17-36 (LLNFFTGAIVATTASAAIYP) traverse the membrane as a helical segment. The Rieske domain maps to 61–161 (GHPIPASQIL…VQVKDDYIWI (101 aa)). [2Fe-2S] cluster contacts are provided by Cys-107, His-109, Cys-125, and His-128. The cysteines at positions 112 and 127 are disulfide-linked.

Belongs to the Rieske iron-sulfur protein family. As to quaternary structure, the 4 large subunits of the cytochrome b6-f complex are cytochrome b6, subunit IV (17 kDa polypeptide, PetD), cytochrome f and the Rieske protein, while the 4 small subunits are PetG, PetL, PetM and PetN. The complex functions as a dimer. The cofactor is [2Fe-2S] cluster.

Its subcellular location is the cellular thylakoid membrane. It catalyses the reaction 2 oxidized [plastocyanin] + a plastoquinol + 2 H(+)(in) = 2 reduced [plastocyanin] + a plastoquinone + 4 H(+)(out). In terms of biological role, component of the cytochrome b6-f complex, which mediates electron transfer between photosystem II (PSII) and photosystem I (PSI), cyclic electron flow around PSI, and state transitions. The protein is Cytochrome b6-f complex iron-sulfur subunit 2 of Nostoc sp. (strain PCC 7120 / SAG 25.82 / UTEX 2576).